Consider the following 402-residue polypeptide: MMGIKSRHLYDRLTKIVIDKDLSAFNEISPSQLIPQLSEHFSITIPKEIFNYNEDQEEDLLHRLKELSRYLVVKFAKRDKYPFTIQRICELSYHPLQYFPVHSLQKFVSAMEKCCLVNTDWTPRLGKECPNTNPMEDVSLIPIEWIRTNKEDEKSLQAFISKIETIVAVNFGYDDFDDDNEDGTDHDIGRGYDNHGDVLIEEYEEMDEEFEDEDYEDHEDEEEDEEDEDNDSDVDEMEAEEVEEDASDDISIGEIAENDDQDNAHTDVTDTQLKYNGVPIEEELRLSSTSSVLSVSSHAANEDENESILSRKRNVTELDDYQYKETKENDGFITTPKKSKMPLNEFGSSSSMVSPVVSNQEDPSRNDDSRINTFISPDTTNSVTQAEKNELSTSPLQDKKRM.

Residues 206-248 (MDEEFEDEDYEDHEDEEEDEEDEDNDSDVDEMEAEEVEEDASD) show a composition bias toward acidic residues. Disordered stretches follow at residues 206 to 270 (MDEE…DVTD), 291 to 311 (SVLS…ILSR), and 331 to 402 (GFIT…KKRM). The segment covering 348-358 (SSSSMVSPVVS) has biased composition (low complexity). Residues 371–396 (INTFISPDTTNSVTQAEKNELSTSPL) show a composition bias toward polar residues.

Belongs to the PPP4R2 family. As to quaternary structure, regulatory subunit (R2) of the histone H2A phosphatase complex (HTP-C) consisting of PPH3, PSY2 and PSY4.

It is found in the nucleus. Regulatory subunit of the histone H2A phosphatase complex, which dephosphorylates H2AS128ph (gamma-H2A) that has been displaced from sites of DNA lesions in the double-stranded DNA break repair process. Dephosphorylation is necessary for efficient recovery from the DNA damage checkpoint. The chain is Serine/threonine-protein phosphatase 4 regulatory subunit 2 (PSY4) from Kluyveromyces lactis (strain ATCC 8585 / CBS 2359 / DSM 70799 / NBRC 1267 / NRRL Y-1140 / WM37) (Yeast).